Here is a 339-residue protein sequence, read N- to C-terminus: tRNA dimethylallyltransferase (339 aa).

Residue 33 to 40 (GPTASGKT) participates in ATP binding. 35-40 (TASGKT) is a binding site for substrate. Interaction with substrate tRNA stretches follow at residues 58–61 (DSLL) and 182–186 (QRIQR).

This sequence belongs to the IPP transferase family. Monomer. Mg(2+) serves as cofactor.

The catalysed reaction is adenosine(37) in tRNA + dimethylallyl diphosphate = N(6)-dimethylallyladenosine(37) in tRNA + diphosphate. In terms of biological role, catalyzes the transfer of a dimethylallyl group onto the adenine at position 37 in tRNAs that read codons beginning with uridine, leading to the formation of N6-(dimethylallyl)adenosine (i(6)A). The protein is tRNA dimethylallyltransferase of Acidithiobacillus ferrooxidans (strain ATCC 23270 / DSM 14882 / CIP 104768 / NCIMB 8455) (Ferrobacillus ferrooxidans (strain ATCC 23270)).